The sequence spans 385 residues: MRGLSRRVQAMKPSATVAVNAKALELRRQGVDLVALTAGEPDFDTPEHVKEAARRALAQGKTKYAPPAGIPELREALAEKFRRENGLSVTPEETIVTVGGKQALFNLFQAILDPGDEVIVLSPYWVSYPEMVRFAGGVVVEVETLPEEGFVPDPERVRRAITPRTKALVVNSPNNPTGAVYPKEVLEALARLAVEHDFYLVSDEIYEHLLYEGEHFSPGRVAPEHTLTVNGAAKAFAMTGWRIGYACGPKEVIKAMASVSSQSTTSPDTIAQWATLEALTNQEASRAFVEMAREAYRRRRDLLLEGLTALGLKAVRPSGAFYVLMDTSPIAPDEVRAAERLLEAGVAVVPGTDFAAFGHVRLSYATSEENLRKALERFARVLGRA.

Positions 39, 125, and 175 each coordinate L-aspartate. An N6-(pyridoxal phosphate)lysine modification is found at Lys-234. Arg-361 is a binding site for L-aspartate.

The protein belongs to the class-I pyridoxal-phosphate-dependent aminotransferase family. In terms of assembly, homodimer. It depends on pyridoxal 5'-phosphate as a cofactor.

Its subcellular location is the cytoplasm. It catalyses the reaction L-aspartate + 2-oxoglutarate = oxaloacetate + L-glutamate. The enzyme catalyses L-arogenate + oxaloacetate = prephenate + L-aspartate. Its function is as follows. Catalyzes the reversible conversion of aspartate and 2-oxoglutarate to glutamate and oxaloacetate. Can also transaminate prephenate in the presence of aspartate. The polypeptide is Aspartate/prephenate aminotransferase (aspC) (Thermus thermophilus (strain ATCC 27634 / DSM 579 / HB8)).